A 213-amino-acid chain; its full sequence is Ribonuclease HII (213 aa).

Residues 1 to 213 (MKIIGIDEAG…SWKTAQKFIQ (213 aa)) enclose the RNase H type-2 domain. 3 residues coordinate a divalent metal cation: Asp-7, Glu-8, and Asp-105.

Belongs to the RNase HII family. It depends on Mn(2+) as a cofactor. Requires Mg(2+) as cofactor.

The protein resides in the cytoplasm. It catalyses the reaction Endonucleolytic cleavage to 5'-phosphomonoester.. Endonuclease that specifically degrades the RNA of RNA-DNA hybrids. In Methanococcoides burtonii (strain DSM 6242 / NBRC 107633 / OCM 468 / ACE-M), this protein is Ribonuclease HII.